Consider the following 501-residue polypeptide: UPF0616 protein C1687.04 (501 aa).

It belongs to the UPF0616 family.

It is found in the cytoplasm. The protein localises to the nucleus. This chain is UPF0616 protein C1687.04, found in Schizosaccharomyces pombe (strain 972 / ATCC 24843) (Fission yeast).